We begin with the raw amino-acid sequence, 424 residues long: UPF0597 protein Sbal223_1296 (424 aa).

The protein belongs to the UPF0597 family.

This Shewanella baltica (strain OS223) protein is UPF0597 protein Sbal223_1296.